Here is a 129-residue protein sequence, read N- to C-terminus: Small ribosomal subunit protein uS8 (129 aa).

It belongs to the universal ribosomal protein uS8 family. In terms of assembly, part of the 30S ribosomal subunit.

Functionally, one of the primary rRNA binding proteins, it binds directly to 16S rRNA central domain where it helps coordinate assembly of the platform of the 30S subunit. This Picrophilus torridus (strain ATCC 700027 / DSM 9790 / JCM 10055 / NBRC 100828 / KAW 2/3) protein is Small ribosomal subunit protein uS8.